We begin with the raw amino-acid sequence, 555 residues long: Tau-cadinol synthase (555 aa).

(2E,6E)-farnesyl diphosphate-binding residues include Arg-270, Asp-307, Asp-311, Arg-448, and Asp-451. Mg(2+)-binding residues include Asp-307 and Asp-311. Positions 307–311 (DDTYD) match the DDXXD motif motif. The Mg(2+) site is built by Asp-451, Ser-455, and Glu-459.

Belongs to the terpene synthase family. Mg(2+) is required as a cofactor.

It carries out the reaction (2E,6E)-farnesyl diphosphate + H2O = tau-cadinol + diphosphate. The enzyme catalyses (2E,6E)-farnesyl diphosphate = (+)-gamma-cadinene + diphosphate. The protein operates within secondary metabolite biosynthesis; terpenoid biosynthesis. In terms of biological role, sesquiterpene synthase that catalyzes the formation of sesquiterpenes and sesquiterpenoid alcohols. Converts farnesyl diphosphate (FPP) to tau-cadinol. Converts FPP to gamma-cadinene. Tau-cadinol is the major product. This Lavandula angustifolia (Lavender) protein is Tau-cadinol synthase.